A 374-amino-acid chain; its full sequence is U-box domain-containing protein 8 (374 aa).

In terms of domain architecture, U-box spans 4–79 (DLPNDFRCPI…LNFAHVSLKE (76 aa)). 5 ARM repeats span residues 126–165 (SSIR…NLSL), 167–206 (DDNK…SLAV), 208–248 (EVNK…ALCS), 250–288 (PDNR…KCRG), and 289–327 (GREE…CLCC).

As to expression, expressed in the whole plant.

It carries out the reaction S-ubiquitinyl-[E2 ubiquitin-conjugating enzyme]-L-cysteine + [acceptor protein]-L-lysine = [E2 ubiquitin-conjugating enzyme]-L-cysteine + N(6)-ubiquitinyl-[acceptor protein]-L-lysine.. It participates in protein modification; protein ubiquitination. Functions as an E3 ubiquitin ligase. Involved in the age-dependent pseudo-self-compatibility process. In Arabidopsis thaliana (Mouse-ear cress), this protein is U-box domain-containing protein 8 (PUB8).